A 331-amino-acid chain; its full sequence is Glycerophosphodiester phosphodiesterase 1 (331 aa).

Residues Met1–Leu3 are Cytoplasmic-facing. A helical membrane pass occupies residues Trp4 to Val24. Residues Thr25–His247 lie on the Lumenal side of the membrane. In terms of domain architecture, GP-PDE spans Ile65–Phe331. Residues Glu97 and Asp99 each coordinate Mg(2+). Asn168 carries N-linked (GlcNAc...) asparagine glycosylation. Residue Asp174 coordinates Mg(2+). Asn198 is a glycosylation site (N-linked (GlcNAc...) asparagine). The helical transmembrane segment at Phe248–Leu268 threads the bilayer. Residues Cys269 to Phe331 lie on the Cytoplasmic side of the membrane.

The protein belongs to the glycerophosphoryl diester phosphodiesterase family. In terms of assembly, interacts with PRAF2. Interacts with RGS16. It depends on Mg(2+) as a cofactor. In terms of processing, N-glycosylated. As to expression, widely expressed.

It is found in the cell membrane. Its subcellular location is the cytoplasmic vesicle membrane. The enzyme catalyses sn-glycero-3-phospho-1D-myo-inositol + H2O = myo-inositol + sn-glycerol 3-phosphate + H(+). It carries out the reaction 1-O-(1Z-octadecenyl)-sn-glycero-3-phospho-(N-5Z,8Z,11Z,14Z-eicosatetraenoyl)-ethanolamine + H2O = 1-O-(1Z-octadecenyl)-sn-glycero-3-phosphate + N-(5Z,8Z,11Z,14Z-eicosatetraenoyl)-ethanolamine + H(+). The catalysed reaction is 1-O-(1Z-octadecenyl)-sn-glycero-3-phospho-(N-9Z-octadecenoyl)-ethanolamine + H2O = 1-O-(1Z-octadecenyl)-sn-glycero-3-phosphate + N-(9Z-octadecenoyl) ethanolamine + H(+). It catalyses the reaction 1-O-(1Z-octadecenyl)-sn-glycero-3-phospho-N-hexadecanoyl-ethanolamine + H2O = 1-O-(1Z-octadecenyl)-sn-glycero-3-phosphate + N-hexadecanoylethanolamine + H(+). The enzyme catalyses N-(4Z,7Z,10Z,13Z,16Z,19Z)-docosahexaenoyl-sn-glycero-3-phosphoethanolamine + H2O = N-(4Z,7Z,10Z,13Z,16Z,19Z)-docosahexaenoyl ethanolamine + sn-glycerol 3-phosphate + H(+). It carries out the reaction N-eicosanoyl-sn-glycero-3-phosphoethanolamine + H2O = N-eicosanoyl ethanolamine + sn-glycerol 3-phosphate + H(+). The catalysed reaction is N-hexadecanoyl-sn-glycero-3-phosphoethanolamine + H2O = N-hexadecanoylethanolamine + sn-glycerol 3-phosphate + H(+). It catalyses the reaction N-(9Z-octadecenoyl)-sn-glycero-3-phosphoethanolamine + H2O = N-(9Z-octadecenoyl) ethanolamine + sn-glycerol 3-phosphate + H(+). The enzyme catalyses N-(5Z,8Z,11Z,14Z-eicosatetraenoyl)-sn-glycero-3-phosphoethanolamine + H2O = N-(5Z,8Z,11Z,14Z-eicosatetraenoyl)-ethanolamine + sn-glycerol 3-phosphate + H(+). With respect to regulation, inhibited by EDTA, calcium chloride, and zinc chloride. Enhanced by magnesium chloride. Glycerophosphodiester phosphodiesterase activity can be modulated by G-protein signaling pathways. In terms of biological role, hydrolyzes the phosphodiester bond of glycerophosphodiesters such as glycerophosphoinositol (GroPIns) and glycerophosphoethanolamine (GroPEth), to yield a glycerol phosphate and an alcohol. Hydrolyzes glycerophospho-N-acylethanolamines to N-acylethanolamines in the brain and participates in bioactive N-acylethanolamine biosynthesis such as anandamide (an endocannabinoid), N-palmitoylethanolamine (an anti-inflammatory), and N-oleoylethanolamine (an anorexic). In addition, has a lysophospholipase D activity by hydrolyzing N-acyl-lysoplasmenylethanolamine (N-acyl-lysoPlsEt) to N-acylethanolamine. However lysophospholipase D activity is lower than glycerophosphodiester phosphodiesterase activity. Has little or no activity towards glycerophosphocholine. This chain is Glycerophosphodiester phosphodiesterase 1, found in Homo sapiens (Human).